Reading from the N-terminus, the 248-residue chain is Mannose-binding protein C (248 aa).

The signal sequence occupies residues methionine 1–serine 20. Residues glycine 42–glutamate 99 form the Collagen-like domain. The interval isoleucine 43 to lysine 113 is disordered. Proline 47 is subject to 4-hydroxyproline. A compositionally biased stretch (basic and acidic residues) spans lysine 49–glutamate 61. A 4-hydroxyproline mark is found at proline 73, proline 79, proline 82, and proline 88. Positions proline 82–lysine 91 are enriched in low complexity. A coiled-coil region spans residues arginine 112–leucine 130. Residues valine 134 to glutamate 245 enclose the C-type lectin domain. 2 disulfides stabilise this stretch: cysteine 155–cysteine 244 and cysteine 222–cysteine 236.

In terms of assembly, oligomeric complex of 3 or more homotrimers. Interacts with MASP1 and MASP2. Interacts with MEP1A and MEP1B and may inhibit their catalytic activity. Post-translationally, hydroxylation on proline residues within the sequence motif, GXPG, is most likely to be 4-hydroxy as this fits the requirement for 4-hydroxylation in vertebrates.

Its subcellular location is the secreted. In terms of biological role, calcium-dependent lectin involved in innate immune defense. Binds mannose, fucose and N-acetylglucosamine on different microorganisms and activates the lectin complement pathway. Binds to late apoptotic cells, as well as to apoptotic blebs and to necrotic cells, but not to early apoptotic cells, facilitating their uptake by macrophages. The chain is Mannose-binding protein C (MBL2) from Chlorocebus aethiops (Green monkey).